We begin with the raw amino-acid sequence, 362 residues long: tRNA/tmRNA (uracil-C(5))-methyltransferase (362 aa).

Residues Q182, Y210, N215, E231, and D293 each coordinate S-adenosyl-L-methionine. C318 serves as the catalytic Nucleophile. The active-site Proton acceptor is E352.

The protein belongs to the class I-like SAM-binding methyltransferase superfamily. RNA M5U methyltransferase family. TrmA subfamily.

The catalysed reaction is uridine(54) in tRNA + S-adenosyl-L-methionine = 5-methyluridine(54) in tRNA + S-adenosyl-L-homocysteine + H(+). The enzyme catalyses uridine(341) in tmRNA + S-adenosyl-L-methionine = 5-methyluridine(341) in tmRNA + S-adenosyl-L-homocysteine + H(+). Its function is as follows. Dual-specificity methyltransferase that catalyzes the formation of 5-methyluridine at position 54 (m5U54) in all tRNAs, and that of position 341 (m5U341) in tmRNA (transfer-mRNA). This chain is tRNA/tmRNA (uracil-C(5))-methyltransferase, found in Neisseria gonorrhoeae (strain ATCC 700825 / FA 1090).